The chain runs to 1520 residues: Protein TALPID3 (1520 aa).

The disordered stretch occupies residues 322–370; sequence LSEDTDFDGQKSPLETPAPRRFAPVPVSRDGKITKRESPTEEKENMEMN. A compositionally biased stretch (basic and acidic residues) spans 350-367; that stretch reads RDGKITKRESPTEEKENM. Position 426 is a phosphoserine (Ser426). Residues 485-572 are required for centrosomal localization; sequence SVLKDAAKIL…YEQKRFDPKN (88 aa). Residues 487 to 519 adopt a coiled-coil conformation; sequence LKDAAKILRGVQNNKKVLEENLEAIVRAKDGAA. Disordered stretches follow at residues 568-632, 759-793, 826-848, 1060-1093, 1145-1170, 1184-1230, and 1500-1520; these read FDPK…RSGL, NSDSMPPAGVTVNKPRPVTVTTSIPPASRKGNAGV, VSYSSTDGASSPPSPKEASLPPL, TPQPTPPCSPSPVREHVRVKTPDSSPCESDPDAA, SSPELPKPWDSGDLPLDEENPNSLQE, EEPE…ENTL, and SQSLSTSSMHGGTESSGTDTF. Composition is skewed to polar residues over residues 587–596 and 605–616; these read ANNQEKTVNR and QKQTQEQFTSPP. Over residues 826-836 the composition is skewed to polar residues; the sequence is VSYSSTDGASS. A phosphothreonine mark is found at Thr1060 and Thr1064. Residues 1060 to 1069 show a composition bias toward pro residues; the sequence is TPQPTPPCSP. Residue Ser1068 is modified to Phosphoserine. Thr1080 carries the phosphothreonine modification. Residue Ser1083 is modified to Phosphoserine. Residues 1195-1205 are compositionally biased toward pro residues; it reads PAPPEPAPSAP. Polar residues predominate over residues 1217 to 1230; the sequence is RVPSSGSSTLENTL.

This sequence belongs to the TALPID3 family. As to quaternary structure, interacts with CEP120. Interacts with CCP110, CEP290, CEP97, KIF24. In terms of tissue distribution, expressed in photoreceptor cells (at protein level).

The protein resides in the cytoplasm. Its subcellular location is the cytoskeleton. The protein localises to the microtubule organizing center. It is found in the centrosome. It localises to the photoreceptor inner segment. The protein resides in the centriole. Its subcellular location is the cilium basal body. Required for ciliogenesis and sonic hedgehog/SHH signaling. Required for the centrosomal recruitment of RAB8A and for the targeting of centriole satellite proteins to centrosomes such as of PCM1. May play a role in early ciliogenesis in the disappearance of centriolar satellites that preceeds ciliary vesicle formation. Involved in regulation of cell intracellular organization. Involved in regulation of cell polarity. Required for asymmetrical localization of CEP120 to daughter centrioles. This Mus musculus (Mouse) protein is Protein TALPID3 (Talpid3).